Here is a 147-residue protein sequence, read N- to C-terminus: Shadow of prion protein (147 aa).

The N-terminal stretch at 1 to 24 (MNWTTATCWALLLATAFLCDSCSA) is a signal peptide. Residues 26–43 (GGRGGARGSARGVRGGAR) are compositionally biased toward gly residues. The tract at residues 26–46 (GGRGGARGSARGVRGGARGAS) is disordered. N-linked (GlcNAc...) asparagine glycosylation occurs at Asn-107. Gly-122 is lipidated: GPI-anchor amidated glycine. A propeptide spans 123 to 147 (SGSVHSPRICLLLSGTLGALELLRP) (removed in mature form).

This sequence belongs to the SPRN family. In terms of processing, N-glycosylated. Almost exclusively expressed in brain, with weak expression in lung and stomach.

Its subcellular location is the cell membrane. Functionally, prion-like protein that has PrP(C)-like neuroprotective activity. May act as a modulator for the biological actions of normal and abnormal PrP. In Rattus norvegicus (Rat), this protein is Shadow of prion protein (Sprn).